The primary structure comprises 398 residues: Phosphoglycerate kinase (398 aa).

Substrate is bound by residues 23–25, Arg-38, 61–64, Arg-120, and Arg-153; these read DLN and HFGR. ATP contacts are provided by residues Lys-203, Glu-325, and 355–358; that span reads GGDT.

The protein belongs to the phosphoglycerate kinase family. In terms of assembly, monomer.

It localises to the cytoplasm. The enzyme catalyses (2R)-3-phosphoglycerate + ATP = (2R)-3-phospho-glyceroyl phosphate + ADP. Its pathway is carbohydrate degradation; glycolysis; pyruvate from D-glyceraldehyde 3-phosphate: step 2/5. This is Phosphoglycerate kinase from Chelativorans sp. (strain BNC1).